Reading from the N-terminus, the 49-residue chain is Osteocalcin (49 aa).

The region spanning 1–47 (YLDPGLGAPAPYPDPLEPKREVCELNPDCDELADHIGFQEAYRRFYG) is the Gla domain. P9 is subject to Hydroxyproline. The Ca(2+) site is built by E17, E21, E24, and D30. A 4-carboxyglutamate mark is found at E17, E21, and E24. A disulfide bridge links C23 with C29.

The protein belongs to the osteocalcin/matrix Gla protein family. In terms of processing, gamma-carboxyglutamate residues are formed by vitamin K dependent carboxylation by GGCX. These residues are essential for the binding of calcium. Decarboxylation promotes the hormone activity.

The protein resides in the secreted. Functionally, the carboxylated form is one of the main organic components of the bone matrix, which constitutes 1-2% of the total bone protein. It acts as a negative regulator of bone formation and is required to limit bone formation without impairing bone resorption or mineralization. The carboxylated form binds strongly to apatite and calcium. Its function is as follows. The uncarboxylated form acts as a hormone secreted by osteoblasts, which regulates different cellular processes, such as energy metabolism, male fertility and brain development. Regulates of energy metabolism by acting as a hormone favoring pancreatic beta-cell proliferation, insulin secretion and sensitivity and energy expenditure. Uncarboxylated osteocalcin hormone also promotes testosterone production in the testes: acts as a ligand for G protein-coupled receptor GPRC6A at the surface of Leydig cells, initiating a signaling response that promotes the expression of enzymes required for testosterone synthesis in a CREB-dependent manner. Also acts as a regulator of brain development: osteocalcin hormone crosses the blood-brain barrier and acts as a ligand for GPR158 on neurons, initiating a signaling response that prevents neuronal apoptosis in the hippocampus, favors the synthesis of all monoamine neurotransmitters and inhibits that of gamma-aminobutyric acid (GABA). Osteocalcin also crosses the placenta during pregnancy and maternal osteocalcin is required for fetal brain development. The polypeptide is Osteocalcin (BGLAP) (Capra hircus (Goat)).